We begin with the raw amino-acid sequence, 458 residues long: Protein adenylyltransferase FICD (458 aa).

The Cytoplasmic segment spans residues 1-23 (MILMPMASVVAVAEPKWVSVWGR). Residues 24–44 (FLWMALLSMALGSLLALLLPL) traverse the membrane as a helical; Signal-anchor for type II membrane protein segment. At 45–458 (GVVEEHCLAV…GFKETLPVRP (414 aa)) the chain is on the lumenal side. T80 is subject to O-AMP-threonine; by autocatalysis. TPR repeat units lie at residues 106 to 139 (AKAA…DPGF) and 140 to 173 (VDAL…SPFH). T183 is subject to O-AMP-threonine; by autocatalysis. Positions 230-235 (TVAIEG) match the Inhibitory (S/T)XXXE(G/N) motif motif. E234 lines the ATP pocket. A glycan (N-linked (GlcNAc...) asparagine) is linked at N275. A Fido domain is found at 285–420 (VTMDDMLEIH…VRPFIRFIAK (136 aa)). 316-319 (VGHH) lines the ATP pocket. H363 is a catalytic residue. ATP contacts are provided by residues 367–374 (DGNGRTSR), 399–400 (YY), and N407.

The protein belongs to the fic family. As to quaternary structure, homodimer. Interacts with HD. Requires Mg(2+) as cofactor. Mn(2+) serves as cofactor. Post-translationally, auto-AMPylated in vitro.

Its subcellular location is the endoplasmic reticulum membrane. It catalyses the reaction L-tyrosyl-[protein] + ATP = O-(5'-adenylyl)-L-tyrosyl-[protein] + diphosphate. It carries out the reaction 3-O-(5'-adenylyl)-L-threonyl-[protein] + H2O = L-threonyl-[protein] + AMP + H(+). The enzyme catalyses L-threonyl-[protein] + ATP = 3-O-(5'-adenylyl)-L-threonyl-[protein] + diphosphate. Its activity is regulated as follows. The side chain of Glu-234 determines which of the two opposing activities (AMPylase or de-AMPylase) will take place. In response to endoplasmic reticulum stress, mediates de-AMPylase activity. Adenylyltransferase activity is inhibited by the inhibitory helix present at the N-terminus: Glu-234 binds ATP and competes with ATP-binding at Arg-374, thereby preventing adenylyltransferase activity. In unstressed cells, disengagement of Glu-234 promotes adenylyltransferase activity. Activation dissociates ATP-binding from Glu-234, allowing ordered binding of the entire ATP moiety with the alpha-phosphate in an orientation that is productive for accepting an incoming target hydroxyl side chain. Functionally, protein that can both mediate the addition of adenosine 5'-monophosphate (AMP) to specific residues of target proteins (AMPylation), and the removal of the same modification from target proteins (de-AMPylation), depending on the context. The side chain of Glu-231 determines which of the two opposing activities (AMPylase or de-AMPylase) will take place. Acts as a key regulator of the ERN1/IRE1-mediated unfolded protein response (UPR) by mediating AMPylation or de-AMPylation of HSPA5/BiP. In unstressed cells, acts as an adenylyltransferase by mediating AMPylation of HSPA5/BiP at 'Thr-518', thereby inactivating it. In response to endoplasmic reticulum stress, acts as a phosphodiesterase by mediating removal of ATP (de-AMPylation) from HSPA5/BiP at 'Thr-518', leading to restore HSPA5/BiP activity. Although it is able to AMPylate RhoA, Rac and Cdc42 Rho GTPases in vitro, Rho GTPases do not constitute physiological substrates. This Mus musculus (Mouse) protein is Protein adenylyltransferase FICD.